The primary structure comprises 162 residues: Nucleotide-binding protein CMM_2802 (162 aa).

It belongs to the YajQ family.

In terms of biological role, nucleotide-binding protein. This chain is Nucleotide-binding protein CMM_2802, found in Clavibacter michiganensis subsp. michiganensis (strain NCPPB 382).